Consider the following 587-residue polypeptide: Ankyrin repeat and SOCS box protein 14 (587 aa).

11 ANK repeats span residues 82 to 112 (IGWIPLHKAAVQLNRKILEITLSASDPSLWE), 117 to 146 (NGETPLFLAVSSCLLENATFLLLNGCNPNA), 150 to 179 (EGNSPLLAAVLRDCYDMAALLINYGADVNL), 183 to 212 (NERTALHEAAKLGREDMVKLMLVSGAHPDP), 216 to 245 (YGFTPLALAAQSGHTEIMEMLLRKGKIFCL), 248 to 277 (DSSSILLEAASGGNPDAVALLLEYGADANI), 281 to 310 (SGHLPIHVAADRGHLLALKILIPVTDLAAI), 313 to 342 (SGISPVHCAAAGAHPQCLELLIQAGFDVNF), 355 to 384 (HRKSALYFAVSNSDLSSVKLLLSAGALPNQ), 385 to 414 (DPVNCLQIALRMGNYELISLLLRHGANVNY), and 416 to 449 (CRVNPLHFPSALQYTLKDEVMLRMLLNYGYDTER). The 56-residue stretch at 521–576 (WSEIHFILTNPRSLKHLCRLKIRKCMGRLHLRCPVFMSFLPLPNRLKAYVLYKEYD) folds into the SOCS box domain.

The protein belongs to the ankyrin SOCS box (ASB) family. In terms of assembly, interacts with MAPRE2; this interaction promotes MAPRE2 degradation.

It participates in protein modification; protein ubiquitination. Its function is as follows. May be a substrate-recognition component of a SCF-like ECS (Elongin-Cullin-SOCS-box protein) E3 ubiquitin-protein ligase complex which mediates the ubiquitination and subsequent proteasomal degradation of target proteins. Plays a role in the inhibition of cardiomyocyte nuclear proliferation by mediating the ubiquitination and degradation of MAPRE2. This chain is Ankyrin repeat and SOCS box protein 14 (ASB14), found in Homo sapiens (Human).